A 69-amino-acid polypeptide reads, in one-letter code: Large ribosomal subunit protein bL31 (69 aa).

Positions 16, 18, 37, and 40 each coordinate Zn(2+).

The protein belongs to the bacterial ribosomal protein bL31 family. Type A subfamily. As to quaternary structure, part of the 50S ribosomal subunit. Zn(2+) is required as a cofactor.

Binds the 23S rRNA. The polypeptide is Large ribosomal subunit protein bL31 (Buchnera aphidicola subsp. Cinara cedri (strain Cc)).